We begin with the raw amino-acid sequence, 578 residues long: MESEQRRKRKRIYKPDSTSNSFFSVRSLTACLSFFVFLLFISSDRSPIKTVSFRPVLNVPVSLLPTPLGLTRDSFDTKSLPLIVEDRVLLPDHVLLIVSNKVATSQNLDCVYSNLYNSHDVVLKPALSVNQYHRDKSIVRCQLPPNNYSAAVYLRWSWEAAEGVAAAAPASVVSWDRVVYEAMLDWNTVAVFVKGLNLRPHKESDSSKFRCHFGLSKFDKDEGIVFTTEAITAAQEVIRCLLPRSIRNNPVKAQGIRVTVSRINAGEDGVDAPLPSVAKVYGAKSYEKRSNRGKYELCACTMLWNQASFLHEWITYHAWLGVQRWFIYDNNSDDGIQEVVDELNLQNYNVTRHSWPWIKAQEAGFSHCALRARSECKWLGFFDVDEFFYLPRHRGQDMLGENSLRTLVANYSDSSTYAEIRTICHSFGPSGLTSAPSQGVTVGYTCRLQAPERHKSIVRPELLDTTLLNVVHHFKLKEGYRYLNVPESTAVVNHYKYQVWDTFKAKFFRRVSTYVANWQEDQNQGSKDRAPGLGTVAIEPPDWRLRFCEVWDTGLKDFVLANFADTASGYLPWERSPF.

A helical membrane pass occupies residues 21–43; the sequence is SFFSVRSLTACLSFFVFLLFISS. A GT92 domain is found at 295–531; it reads YELCACTMLW…QNQGSKDRAP (237 aa).

It belongs to the glycosyltransferase 92 family.

It localises to the membrane. In Ricinus communis (Castor bean), this protein is Glycosyltransferase family 92 protein RCOM_0530710.